Consider the following 325-residue polypeptide: Beta-ketoacyl-[acyl-carrier-protein] synthase III (325 aa).

Active-site residues include cysteine 116 and histidine 252. Residues 253 to 257 are ACP-binding; the sequence is QANLR. The active site involves asparagine 282.

Belongs to the thiolase-like superfamily. FabH family. Homodimer.

The protein localises to the cytoplasm. The catalysed reaction is malonyl-[ACP] + acetyl-CoA + H(+) = 3-oxobutanoyl-[ACP] + CO2 + CoA. It functions in the pathway lipid metabolism; fatty acid biosynthesis. Catalyzes the condensation reaction of fatty acid synthesis by the addition to an acyl acceptor of two carbons from malonyl-ACP. Catalyzes the first condensation reaction which initiates fatty acid synthesis and may therefore play a role in governing the total rate of fatty acid production. Possesses both acetoacetyl-ACP synthase and acetyl transacylase activities. Its substrate specificity determines the biosynthesis of branched-chain and/or straight-chain of fatty acids. This is Beta-ketoacyl-[acyl-carrier-protein] synthase III from Xanthomonas campestris pv. campestris (strain ATCC 33913 / DSM 3586 / NCPPB 528 / LMG 568 / P 25).